The following is a 543-amino-acid chain: Cytochrome P450 1B1 (543 aa).

Residue Cys470 participates in heme binding.

It belongs to the cytochrome P450 family. Heme is required as a cofactor. As to expression, expressed in heart, brain, lung, skeletal muscle, kidney, spleen, thymus, prostate, testis, ovary, small intestine, colon, and peripheral blood leukocytes. Expressed in retinal endothelial cells and umbilical vein endothelial cells (at protein level).

It localises to the endoplasmic reticulum membrane. The protein resides in the microsome membrane. It is found in the mitochondrion. It carries out the reaction an organic molecule + reduced [NADPH--hemoprotein reductase] + O2 = an alcohol + oxidized [NADPH--hemoprotein reductase] + H2O + H(+). The catalysed reaction is 17beta-estradiol + reduced [NADPH--hemoprotein reductase] + O2 = 2-hydroxy-17beta-estradiol + oxidized [NADPH--hemoprotein reductase] + H2O + H(+). The enzyme catalyses 17beta-estradiol + reduced [NADPH--hemoprotein reductase] + O2 = 4-hydroxy-17beta-estradiol + oxidized [NADPH--hemoprotein reductase] + H2O + H(+). It catalyses the reaction estrone + reduced [NADPH--hemoprotein reductase] + O2 = 2-hydroxyestrone + oxidized [NADPH--hemoprotein reductase] + H2O + H(+). It carries out the reaction estrone + reduced [NADPH--hemoprotein reductase] + O2 = 4-hydroxyestrone + oxidized [NADPH--hemoprotein reductase] + H2O + H(+). The catalysed reaction is testosterone + reduced [NADPH--hemoprotein reductase] + O2 = 6beta,17beta-dihydroxyandrost-4-en-3-one + oxidized [NADPH--hemoprotein reductase] + H2O + H(+). The enzyme catalyses progesterone + reduced [NADPH--hemoprotein reductase] + O2 = 6beta-hydroxyprogesterone + oxidized [NADPH--hemoprotein reductase] + H2O + H(+). It catalyses the reaction progesterone + reduced [NADPH--hemoprotein reductase] + O2 = 16alpha-hydroxyprogesterone + oxidized [NADPH--hemoprotein reductase] + H2O + H(+). It carries out the reaction all-trans-retinol + reduced [NADPH--hemoprotein reductase] + O2 = all-trans-retinal + oxidized [NADPH--hemoprotein reductase] + 2 H2O + H(+). The catalysed reaction is all-trans-retinal + reduced [NADPH--hemoprotein reductase] + O2 = all-trans-retinoate + oxidized [NADPH--hemoprotein reductase] + H2O + 2 H(+). The enzyme catalyses (5Z,8Z,11Z,14Z)-eicosatetraenoate + reduced [NADPH--hemoprotein reductase] + O2 = (8R,9S)-epoxy-(5Z,11Z,14Z)-eicosatrienoate + oxidized [NADPH--hemoprotein reductase] + H2O + H(+). It catalyses the reaction (5Z,8Z,11Z,14Z)-eicosatetraenoate + reduced [NADPH--hemoprotein reductase] + O2 = (11R,12S)-epoxy-(5Z,8Z,14Z)-eicosatrienoate + oxidized [NADPH--hemoprotein reductase] + H2O + H(+). It carries out the reaction (5Z,8Z,11Z,14Z)-eicosatetraenoate + reduced [NADPH--hemoprotein reductase] + O2 = (11S,12R)-epoxy-(5Z,8Z,14Z)-eicosatrienoate + oxidized [NADPH--hemoprotein reductase] + H2O + H(+). The catalysed reaction is (5Z,8Z,11Z,14Z)-eicosatetraenoate + reduced [NADPH--hemoprotein reductase] + O2 = (14R,15S)-epoxy-(5Z,8Z,11Z)-eicosatrienoate + oxidized [NADPH--hemoprotein reductase] + H2O + H(+). The enzyme catalyses (5S)-hydroperoxy-(6E,8Z,11Z,14Z)-eicosatetraenoate = 5-oxo-(6E,8Z,11Z,14Z)-eicosatetraenoate + H2O. It catalyses the reaction (12S)-hydroperoxy-(5Z,8Z,10E,14Z)-eicosatetraenoate = 12-oxo-(5Z,8Z,10E,14Z)-eicosatetraenoate + H2O. It carries out the reaction (13S)-hydroperoxy-(9Z,11E)-octadecadienoate = 13-oxo-(9Z,11E)-octadecadienoate + H2O. The catalysed reaction is (15S)-hydroperoxy-(5Z,8Z,11Z,13E)-eicosatetraenoate = 15-oxo-(5Z,8Z,11Z,13E)-eicosatetraenoate + H2O. It participates in steroid hormone biosynthesis. The protein operates within cofactor metabolism; retinol metabolism. It functions in the pathway lipid metabolism; arachidonate metabolism. Enzyme activity is increased by liposomes containing anionic phospholipids, phosphatidic acid and cardiolipin. Inhibited by naringenin with an IC(50) of 5 uM. Enzyme activity is increased by cytochrome b5. In terms of biological role, a cytochrome P450 monooxygenase involved in the metabolism of various endogenous substrates, including fatty acids, steroid hormones and vitamins. Mechanistically, uses molecular oxygen inserting one oxygen atom into a substrate, and reducing the second into a water molecule, with two electrons provided by NADPH via cytochrome P450 reductase (NADPH--hemoprotein reductase). Exhibits catalytic activity for the formation of hydroxyestrogens from estrone (E1) and 17beta-estradiol (E2), namely 2- and 4-hydroxy E1 and E2. Displays a predominant hydroxylase activity toward E2 at the C-4 position. Metabolizes testosterone and progesterone to B or D ring hydroxylated metabolites. May act as a major enzyme for all-trans retinoic acid biosynthesis in extrahepatic tissues. Catalyzes two successive oxidative transformation of all-trans retinol to all-trans retinal and then to the active form all-trans retinoic acid. Catalyzes the epoxidation of double bonds of certain PUFA. Converts arachidonic acid toward epoxyeicosatrienoic acid (EpETrE) regioisomers, 8,9-, 11,12-, and 14,15- EpETrE, that function as lipid mediators in the vascular system. Additionally, displays dehydratase activity toward oxygenated eicosanoids hydroperoxyeicosatetraenoates (HpETEs). This activity is independent of cytochrome P450 reductase, NADPH, and O2. Also involved in the oxidative metabolism of xenobiotics, particularly converting polycyclic aromatic hydrocarbons and heterocyclic aryl amines procarcinogens to DNA-damaging products. Plays an important role in retinal vascular development. Under hyperoxic O2 conditions, promotes retinal angiogenesis and capillary morphogenesis, likely by metabolizing the oxygenated products generated during the oxidative stress. Also, contributes to oxidative homeostasis and ultrastructural organization and function of trabecular meshwork tissue through modulation of POSTN expression. The protein is Cytochrome P450 1B1 of Homo sapiens (Human).